Consider the following 1203-residue polypeptide: Regulator of telomere elongation helicase 1 (1203 aa).

A Helicase ATP-binding domain is found at 7 to 296 (NGVTVDFPFQ…ARVTQQGELQ (290 aa)). 42–49 (SPTGTGKT) contacts ATP. [4Fe-4S] cluster contacts are provided by Cys145, Cys163, Cys172, and Cys207. The Nuclear localization signal motif lies at 151-167 (KKQESNHMQISLCRKKV). The short motif at 250 to 253 (DEAH) is the DEAH box element. The Nuclear localization signal signature appears at 871–877 (QKGGRKK). 2 disordered regions span residues 998 to 1020 (QLDP…TSKG) and 1120 to 1203 (TTGK…RSKQ). Polar residues predominate over residues 1004-1020 (HLNQGQPHLSAHPTSKG). Over residues 1123-1134 (KDLELEGPRDES) the composition is skewed to basic and acidic residues. Residues 1160–1167 (QSKISSFF) carry the PIP-box motif. Residues 1169–1181 (QRPDESVRSDDTT) are compositionally biased toward basic and acidic residues.

This sequence belongs to the helicase family. RAD3/XPD subfamily. As to quaternary structure, interacts with TERF1. Interacts (via PIP-box) with PCNA; the interaction is direct and essential for suppressing telomere fragility. Interacts with MMS19; the interaction mediates the association of RTEL1 with the cytosolic iron-sulfur protein assembly (CIA) complex. Widely expressed. Expressed in spleen, thymus, Peyer patches, kidney, and intestine. Not expressed in brain, heart, lung, skeletal muscles, skin and white fat. In the adult gonad, it is highly expressed in the testis, mainly in the spermatogonia and meiotic spermatocytes.

It is found in the nucleus. The catalysed reaction is ATP + H2O = ADP + phosphate + H(+). Functionally, a probable ATP-dependent DNA helicase implicated in telomere-length regulation, DNA repair and the maintenance of genomic stability. Acts as an anti-recombinase to counteract toxic recombination and limit crossover during meiosis. Regulates meiotic recombination and crossover homeostasis by physically dissociating strand invasion events and thereby promotes noncrossover repair by meiotic synthesis dependent strand annealing (SDSA) as well as disassembly of D loop recombination intermediates. Also disassembles T loops and prevents telomere fragility by counteracting telomeric G4-DNA structures, which together ensure the dynamics and stability of the telomere. The sequence is that of Regulator of telomere elongation helicase 1 from Mus musculus (Mouse).